The primary structure comprises 204 residues: Glycerol-3-phosphate acyltransferase (204 aa).

5 helical membrane-spanning segments follow: residues 8-28 (ILIF…CYIF), 53-73 (VPAA…VVIA), 81-101 (FITA…IFFG), 116-136 (FGFS…VAII), and 155-175 (VIFT…IIIL).

It belongs to the PlsY family. In terms of assembly, probably interacts with PlsX.

The protein localises to the cell inner membrane. The enzyme catalyses an acyl phosphate + sn-glycerol 3-phosphate = a 1-acyl-sn-glycero-3-phosphate + phosphate. Its pathway is lipid metabolism; phospholipid metabolism. Functionally, catalyzes the transfer of an acyl group from acyl-phosphate (acyl-PO(4)) to glycerol-3-phosphate (G3P) to form lysophosphatidic acid (LPA). This enzyme utilizes acyl-phosphate as fatty acyl donor, but not acyl-CoA or acyl-ACP. The protein is Glycerol-3-phosphate acyltransferase of Francisella tularensis subsp. mediasiatica (strain FSC147).